A 358-amino-acid polypeptide reads, in one-letter code: MINRKKTRELFIGDVGIGGDNPIRVQSMCNTDTRDALSTRAQIDALAEAGCEIVRVAVPDEEAAKALPQIRKGSPVPLVADIHFDYRLALSAMEAGIDALRINPGNIGGEDKVDSVVSAAKERNVPIRIGVNGGSLDKALLAKYGGPTPQAMVESALEHVALLEKRNFYNTKISLKSSSVLNTIAAYKLLAEKVDYPQHVGITEAGTLVRGAVKSSVGLGILFWEGLGDTMRVSLTHDPVAEVGVAWEILRSLGLRERGPEIVSCPTCGRTEIELIDLAQKVEDNLRGVEDVFTVAVMGCVVNGPGEAREADIGIAGGRGLGIIFRKGEVIRKVKGDENLLPEFMKEIELFLKEKRGQ.

[4Fe-4S] cluster-binding residues include Cys-265, Cys-268, Cys-300, and Glu-307.

It belongs to the IspG family. [4Fe-4S] cluster is required as a cofactor.

It catalyses the reaction (2E)-4-hydroxy-3-methylbut-2-enyl diphosphate + oxidized [flavodoxin] + H2O + 2 H(+) = 2-C-methyl-D-erythritol 2,4-cyclic diphosphate + reduced [flavodoxin]. The protein operates within isoprenoid biosynthesis; isopentenyl diphosphate biosynthesis via DXP pathway; isopentenyl diphosphate from 1-deoxy-D-xylulose 5-phosphate: step 5/6. Functionally, converts 2C-methyl-D-erythritol 2,4-cyclodiphosphate (ME-2,4cPP) into 1-hydroxy-2-methyl-2-(E)-butenyl 4-diphosphate. In Maridesulfovibrio salexigens (strain ATCC 14822 / DSM 2638 / NCIMB 8403 / VKM B-1763) (Desulfovibrio salexigens), this protein is 4-hydroxy-3-methylbut-2-en-1-yl diphosphate synthase (flavodoxin).